The sequence spans 163 residues: Large ribosomal subunit protein bL17 (163 aa).

Residues 123-135 (AEASRATRASASK) show a composition bias toward low complexity. Residues 123–163 (AEASRATRASASKKAAEEAETEEVVEAPAEETATEEAAEEK) are disordered. Over residues 140–163 (EAETEEVVEAPAEETATEEAAEEK) the composition is skewed to acidic residues.

This sequence belongs to the bacterial ribosomal protein bL17 family. In terms of assembly, part of the 50S ribosomal subunit. Contacts protein L32.

In Corynebacterium glutamicum (strain ATCC 13032 / DSM 20300 / JCM 1318 / BCRC 11384 / CCUG 27702 / LMG 3730 / NBRC 12168 / NCIMB 10025 / NRRL B-2784 / 534), this protein is Large ribosomal subunit protein bL17.